The sequence spans 257 residues: Nickel import system ATP-binding protein NikD (257 aa).

The ABC transporter domain occupies 4 to 245 (IDIQNLTIKN…HLHPYTERLI (242 aa)). 37 to 44 (GESGAGKS) provides a ligand contact to ATP.

It belongs to the ABC transporter superfamily. As to quaternary structure, the complex is composed of two ATP-binding proteins (NikD and NikE), two transmembrane proteins (NikB and NikC) and a solute-binding protein (NikA).

It is found in the cell membrane. The enzyme catalyses Ni(2+)(out) + ATP + H2O = Ni(2+)(in) + ADP + phosphate + H(+). In terms of biological role, part of the ABC transporter complex NikABCDE (Opp2) involved in nickel import. Probably responsible for energy coupling to the transport system. The chain is Nickel import system ATP-binding protein NikD from Staphylococcus aureus (strain MSSA476).